Here is a 2565-residue protein sequence, read N- to C-terminus: Transformation/transcription domain-associated protein (2565 aa).

S328, S749, and S775 each carry phosphoserine. Residues 710-1087 (SEVVIKWELQ…SPMAANQTPT (378 aa)) form an interaction with TP53 region. The short motif at 745 to 760 (KRGLSVDSAQEVKRFR) is the Bipartite nuclear localization signal element. K1242 is covalently cross-linked (Glycyl lysine isopeptide (Lys-Gly) (interchain with G-Cter in SUMO2)). The segment covering 1242-1253 (KQEPRERENSES) has biased composition (basic and acidic residues). The segment at 1242-1277 (KQEPRERENSESKEEDVEIDIELAPGDQTSTPKTKE) is disordered. The FAT domain occupies 1391–1963 (VLKYLGKTHN…YFPIRTLYLT (573 aa)). K1766 carries the N6-acetyllysine modification. Residues 1973-1995 (KSDSGQQQPSSAGNQSHSASDPG) are disordered. Residues 1975-1991 (DSGQQQPSSAGNQSHSA) are compositionally biased toward polar residues. The region spanning 2206-2529 (MPRVEIVQKH…AVTAIMTRLH (324 aa)) is the PI3K/PI4K catalytic domain. Positions 2212–2218 (VQKHNTA) are G-loop. Residues 2393–2401 (HLNRLNPEM) are catalytic loop. An activation loop region spans residues 2413–2438 (VAYFRFDINDATGDLDANRPVPFRLT). One can recognise an FATC domain in the interval 2533 to 2565 (QFDGGESKVNTLVAAANSLDNLCRMDPAWHPWL).

The protein belongs to the PI3/PI4-kinase family. TRA1 subfamily. As to quaternary structure, interacts with MYC, E2F1 and E2F4 transcription factors. Interacts directly with p53/TP53. Interacts with GCN5L2. Component of various HAT complexes. Component of the PCAF complex, at least composed of TADA2L/ADA2, SUPT3H, TADA3L/ADA3, TAF5L/PAF65-beta, TAF6L/PAF65-alpha, TAF10/TAFII30, TAF12/TAFII20, TAF9/TAFII31 and TRRAP. Component of the TFTC-HAT complex, at least composed of TAF5L, TAF6L, TADA3L, SUPT3H/SPT3, TAF2/TAFII150, TAF4/TAFII135, TAF5/TAFII100, GCN5L2/GCN5, TAF10 and TRRAP. Component of the NuA4 histone acetyltransferase complex which contains the catalytic subunit KAT5/TIP60 and the subunits EP400, TRRAP/PAF400, BRD8/SMAP, EPC1, DMAP1/DNMAP1, RUVBL1/TIP49, RUVBL2, ING3, actin, ACTL6A/BAF53A, MORF4L1/MRG15, MORF4L2/MRGX, MRGBP, YEATS4/GAS41, VPS72/YL1 and MEAF6. Component of the STAGA complex, at least composed of SUPT3H, GCN5L2, SUPT7L, TAF5L, TAF6L, TADA3L, TAD1L, TAF10, TAF12, TRRAP and TAF9. The STAGA core complex is associated with a subcomplex required for histone deubiquitination composed of ATXN7L3, ENY2 and USP22. Component of the BAF53 complex, at least composed of BAF53A, RUVBL1, SMARCA4/BRG1, and TRRAP, which preferentially acetylates histone H4 (and H2A) within nucleosomes. Interacts with NPAT. Interaction with TELO2 and TTI1. Component of a SWR1-like complex. In terms of tissue distribution, expressed in the cochlea.

The protein localises to the nucleus. Functionally, adapter protein, which is found in various multiprotein chromatin complexes with histone acetyltransferase activity (HAT), which gives a specific tag for epigenetic transcription activation. Component of the NuA4 histone acetyltransferase complex which is responsible for acetylation of nucleosomal histones H4 and H2A. Plays a central role in MYC transcription activation, and also participates in cell transformation by MYC. Required for p53/TP53-, E2F1- and E2F4-mediated transcription activation. Probably acts by linking transcription factors such as E1A, MYC or E2F1 to HAT complexes such as STAGA thereby allowing transcription activation. Probably not required in the steps following histone acetylation in processes of transcription activation. May be required for the mitotic checkpoint and normal cell cycle progression. Component of a SWR1-like complex that specifically mediates the removal of histone H2A.Z/H2AZ1 from the nucleosome. May play a role in the formation and maintenance of the auditory system. The sequence is that of Transformation/transcription domain-associated protein (Trrap) from Mus musculus (Mouse).